Here is an 82-residue protein sequence, read N- to C-terminus: STGEELFKAKACVACHSVDKKLVGPAFHDVAAKYGAQGDGVAHITNSIKTGSKGNWGPIPMPPNAVSPEEAKTLAEWIVTLK.

Heme c contacts are provided by Cys12, Cys15, His16, and Met61.

Post-translationally, binds 1 heme c group covalently per subunit.

In terms of biological role, this is a prokaryotic monoheme cytochrome, unreactive with mitochondrial cytochrome C oxidase or reductase. It functions in nitrite and nitrate respiration in Pseudomonas, but it is also found in other bacteria. This chain is Cytochrome c-551, found in Pseudomonas denitrificans.